Consider the following 231-residue polypeptide: Enolase-phosphatase E1 (231 aa).

Belongs to the HAD-like hydrolase superfamily. MasA/MtnC family. In terms of assembly, monomer. It depends on Mg(2+) as a cofactor.

It carries out the reaction 5-methylsulfanyl-2,3-dioxopentyl phosphate + H2O = 1,2-dihydroxy-5-(methylsulfanyl)pent-1-en-3-one + phosphate. The protein operates within amino-acid biosynthesis; L-methionine biosynthesis via salvage pathway; L-methionine from S-methyl-5-thio-alpha-D-ribose 1-phosphate: step 3/6. Its pathway is amino-acid biosynthesis; L-methionine biosynthesis via salvage pathway; L-methionine from S-methyl-5-thio-alpha-D-ribose 1-phosphate: step 4/6. Its function is as follows. Bifunctional enzyme that catalyzes the enolization of 2,3-diketo-5-methylthiopentyl-1-phosphate (DK-MTP-1-P) into the intermediate 2-hydroxy-3-keto-5-methylthiopentenyl-1-phosphate (HK-MTPenyl-1-P), which is then dephosphorylated to form the acireductone 1,2-dihydroxy-3-keto-5-methylthiopentene (DHK-MTPene). This is Enolase-phosphatase E1 from Stenotrophomonas maltophilia (strain R551-3).